Consider the following 148-residue polypeptide: Helix-loop-helix protein 14 (148 aa).

Disordered stretches follow at residues 1–21 (MAKKNQVARNERERKRVHQVN), 63–83 (DPQQPSVSSSTPDYTMNNSNN), and 112–132 (GDVSHNFNSPTSSVSSSSYSP). The basic motif stretch occupies residues 4–17 (KNQVARNERERKRV). One can recognise a bHLH domain in the interval 4–56 (KNQVARNERERKRVHQVNHGFDVLRNRLQPKNHTKKWSKADTLREAVKYIQQL). Residues 18–56 (HQVNHGFDVLRNRLQPKNHTKKWSKADTLREAVKYIQQL) form a helix-loop-helix motif region. Over residues 63–78 (DPQQPSVSSSTPDYTM) the composition is skewed to polar residues. Positions 120–132 (SPTSSVSSSSYSP) are enriched in low complexity.

The protein localises to the nucleus. Functionally, probable transcription factor, involved in determining neuroblast cell fate, morphogenesis and aspects of terminal differentiation in both left/right symmetric and asymmetric neuronal lineages. The sequence is that of Helix-loop-helix protein 14 from Caenorhabditis elegans.